The chain runs to 40 residues: Photosystem II reaction center protein J (40 aa).

The chain crosses the membrane as a helical span at residues 8–28; the sequence is IPLWIIGTGAGILVIGLIGIF.

It belongs to the PsbJ family. As to quaternary structure, PSII is composed of 1 copy each of membrane proteins PsbA, PsbB, PsbC, PsbD, PsbE, PsbF, PsbH, PsbI, PsbJ, PsbK, PsbL, PsbM, PsbT, PsbX, PsbY, PsbZ, Psb30/Ycf12, at least 3 peripheral proteins of the oxygen-evolving complex and a large number of cofactors. It forms dimeric complexes.

The protein resides in the plastid. It is found in the chloroplast thylakoid membrane. One of the components of the core complex of photosystem II (PSII). PSII is a light-driven water:plastoquinone oxidoreductase that uses light energy to abstract electrons from H(2)O, generating O(2) and a proton gradient subsequently used for ATP formation. It consists of a core antenna complex that captures photons, and an electron transfer chain that converts photonic excitation into a charge separation. The polypeptide is Photosystem II reaction center protein J (Aethionema grandiflorum (Persian stone-cress)).